We begin with the raw amino-acid sequence, 96 residues long: Small ribosomal subunit protein bS18 (96 aa).

The protein belongs to the bacterial ribosomal protein bS18 family. As to quaternary structure, part of the 30S ribosomal subunit. Forms a tight heterodimer with protein bS6.

In terms of biological role, binds as a heterodimer with protein bS6 to the central domain of the 16S rRNA, where it helps stabilize the platform of the 30S subunit. This Borreliella burgdorferi (strain ATCC 35210 / DSM 4680 / CIP 102532 / B31) (Borrelia burgdorferi) protein is Small ribosomal subunit protein bS18.